The sequence spans 275 residues: Phosphate import ATP-binding protein PstB 2 (275 aa).

One can recognise an ABC transporter domain in the interval 29–270 (LEVKNLNIYY…PSEKKTEDYI (242 aa)). ATP is bound at residue 61–68 (GPSGCGKS).

The protein belongs to the ABC transporter superfamily. Phosphate importer (TC 3.A.1.7) family. In terms of assembly, the complex is composed of two ATP-binding proteins (PstB), two transmembrane proteins (PstC and PstA) and a solute-binding protein (PstS).

The protein resides in the cell membrane. It catalyses the reaction phosphate(out) + ATP + H2O = ADP + 2 phosphate(in) + H(+). In terms of biological role, part of the ABC transporter complex PstSACB involved in phosphate import. Responsible for energy coupling to the transport system. This is Phosphate import ATP-binding protein PstB 2 from Bacillus licheniformis (strain ATCC 14580 / DSM 13 / JCM 2505 / CCUG 7422 / NBRC 12200 / NCIMB 9375 / NCTC 10341 / NRRL NRS-1264 / Gibson 46).